The sequence spans 338 residues: 1-aminocyclopropane-1-carboxylate deaminase (338 aa).

N6-(pyridoxal phosphate)lysine is present on K51. The Nucleophile role is filled by S78.

This sequence belongs to the ACC deaminase/D-cysteine desulfhydrase family. Homotrimer. Pyridoxal 5'-phosphate serves as cofactor.

The catalysed reaction is 1-aminocyclopropane-1-carboxylate + H2O = 2-oxobutanoate + NH4(+). Catalyzes a cyclopropane ring-opening reaction, the irreversible conversion of 1-aminocyclopropane-1-carboxylate (ACC) to ammonia and alpha-ketobutyrate. Allows growth on ACC as a nitrogen source. The chain is 1-aminocyclopropane-1-carboxylate deaminase from Pseudomonas syringae pv. tomato (strain ATCC BAA-871 / DC3000).